The primary structure comprises 84 residues: Mitochondrial import inner membrane translocase subunit Tim9 (84 aa).

The Twin CX3C motif motif lies at 36 to 60; it reads CFQSCITNFRIRKLDDEEQLCVYKC. Disulfide bonds link Cys-36-Cys-60 and Cys-40-Cys-56.

Belongs to the small Tim family. In terms of assembly, heterohexamer; composed of 3 copies of timm9 and 3 copies of timm10, named soluble 70 kDa complex. Associates directly with the TIM22 complex, whose core is composed of timm22. Interacts with the transmembrane regions of multi-pass transmembrane proteins in transit.

It is found in the mitochondrion inner membrane. Component of the TIM22 complex, a complex that mediates the import and insertion of multi-pass transmembrane proteins into the mitochondrial inner membrane. The TIM22 complex forms a twin-pore translocase that uses the membrane potential as external driving force. This chain is Mitochondrial import inner membrane translocase subunit Tim9 (timm9), found in Dictyostelium discoideum (Social amoeba).